Here is a 309-residue protein sequence, read N- to C-terminus: tRNA pseudouridine synthase B (309 aa).

Asp-51 (nucleophile) is an active-site residue.

This sequence belongs to the pseudouridine synthase TruB family. Type 1 subfamily.

It carries out the reaction uridine(55) in tRNA = pseudouridine(55) in tRNA. Functionally, responsible for synthesis of pseudouridine from uracil-55 in the psi GC loop of transfer RNAs. The sequence is that of tRNA pseudouridine synthase B from Coxiella burnetii (strain Dugway 5J108-111).